The chain runs to 314 residues: MIOREX complex component 8 (314 aa).

An EngB-type G domain is found at 132–312 (TLPEVIFLGG…RYVIFQSCGL (181 aa)). GTP-binding positions include 140 to 147 (GGTNVGKS), 173 to 177 (GFTKT), 191 to 194 (DSPG), 253 to 256 (TKMD), and 290 to 292 (SST). Residues Ser-147 and Thr-175 each coordinate Mg(2+).

This sequence belongs to the TRAFAC class TrmE-Era-EngA-EngB-Septin-like GTPase superfamily. EngB GTPase family. Associates with the mitochondrial ribosome. Mg(2+) serves as cofactor. In terms of processing, sumoylated upon ethanol stress.

Its subcellular location is the mitochondrion. Component of MIOREX complexes, large expressome-like assemblies of ribosomes with factors involved in all the steps of post-transcriptional gene expression. This Saccharomyces cerevisiae (strain ATCC 204508 / S288c) (Baker's yeast) protein is MIOREX complex component 8.